The primary structure comprises 394 residues: Elongation factor Tu (394 aa).

One can recognise a tr-type G domain in the interval 10 to 205 (KPHMNVGTIG…SMDNYFDLPE (196 aa)). The tract at residues 19-26 (GHVDHGKT) is G1. 19 to 26 (GHVDHGKT) lines the GTP pocket. A Mg(2+)-binding site is contributed by threonine 26. The tract at residues 61–65 (GITIN) is G2. Positions 82 to 85 (DCPG) are G3. Residues 82 to 86 (DCPGH) and 137 to 140 (NKLD) each bind GTP. A G4 region spans residues 137-140 (NKLD). A G5 region spans residues 173–175 (SAF).

The protein belongs to the TRAFAC class translation factor GTPase superfamily. Classic translation factor GTPase family. EF-Tu/EF-1A subfamily. In terms of assembly, monomer.

It localises to the cytoplasm. It catalyses the reaction GTP + H2O = GDP + phosphate + H(+). Its function is as follows. GTP hydrolase that promotes the GTP-dependent binding of aminoacyl-tRNA to the A-site of ribosomes during protein biosynthesis. The polypeptide is Elongation factor Tu (Borreliella afzelii (strain PKo) (Borrelia afzelii)).